Reading from the N-terminus, the 514-residue chain is 5'-AMP-activated protein kinase subunit gamma-3 (514 aa).

Disordered stretches follow at residues 1–121 (MELA…FPKA) and 134–155 (DNPPTERDILPSDCAASASDSN). The segment covering 59–71 (SRSWPSRAVTTSS) has biased composition (polar residues). 3 CBS domains span residues 222–283 (MATS…RSPL), 305–363 (CFKP…GTLL), and 380–440 (TFRD…HLDM). ADP-binding positions include Arg250, 265-270 (MLTITD), Val310, 331-332 (HR), and Lys350. AMP-binding positions include Arg250, 265–270 (MLTITD), Val310, His331, 331–332 (HR), Lys350, Thr380, Ala385, 406–407 (SA), 422–425 (SRFD), Arg449, Leu457, His478, 478–479 (HR), and 494–497 (SLSD). ATP-binding positions include Arg250, 265–270 (MLTITD), Val310, 331–332 (HR), Arg332, and Lys350. Positions 318-339 (LFEAVYALIKNRIHRLPVLDPV) match the AMPK pseudosubstrate motif. Residues 422–425 (SRFD), Arg449, Leu457, and 478–479 (HR) contribute to the ADP site. ATP is bound by residues 422–425 (SRFD), Arg449, Leu457, and 478–479 (HR). The region spanning 452-511 (CLEGVLSCQPHETLGEVIDRIVREQVHRLVLVDETQHLLGVVSLSDILQALVLSPAGIDA) is the CBS 4 domain.

Belongs to the 5'-AMP-activated protein kinase gamma subunit family. AMPK is a heterotrimer of an alpha catalytic subunit (PRKAA1 or PRKAA2), a beta (PRKAB1 or PRKAB2) and a gamma non-catalytic subunits (PRKAG1, PRKAG2 or PRKAG3). Interacts with FNIP1 and FNIP2. In terms of processing, phosphorylated by ULK1; leading to negatively regulate AMPK activity and suggesting the existence of a regulatory feedback loop between ULK1 and AMPK. Post-translationally, glycosylated; O-GlcNAcylated by OGT, promoting the AMP-activated protein kinase (AMPK) activity. In terms of tissue distribution, muscle.

Functionally, AMP/ATP-binding subunit of AMP-activated protein kinase (AMPK), an energy sensor protein kinase that plays a key role in regulating cellular energy metabolism. In response to reduction of intracellular ATP levels, AMPK activates energy-producing pathways and inhibits energy-consuming processes: inhibits protein, carbohydrate and lipid biosynthesis, as well as cell growth and proliferation. AMPK acts via direct phosphorylation of metabolic enzymes, and by longer-term effects via phosphorylation of transcription regulators. AMPK also acts as a regulator of cellular polarity by remodeling the actin cytoskeleton; probably by indirectly activating myosin. The AMPK gamma3 subunit is a non-catalytic subunit with a regulatory role in muscle energy metabolism. It mediates binding to AMP, ADP and ATP, leading to AMPK activation or inhibition: AMP-binding results in allosteric activation of alpha catalytic subunit (PRKAA1 or PRKAA2) both by inducing phosphorylation and preventing dephosphorylation of catalytic subunits. ADP also stimulates phosphorylation, without stimulating already phosphorylated catalytic subunit. ATP promotes dephosphorylation of catalytic subunit, rendering the AMPK enzyme inactive. In Sus scrofa (Pig), this protein is 5'-AMP-activated protein kinase subunit gamma-3 (PRKAG3).